A 202-amino-acid polypeptide reads, in one-letter code: Peptide deformylase (202 aa).

The disordered stretch occupies residues 1 to 24 (MAGSFAQLAKNAEKKKPSISVSKE). Fe cation contacts are provided by C121 and H163. E164 is an active-site residue. H167 is a Fe cation binding site.

It belongs to the polypeptide deformylase family. Fe(2+) is required as a cofactor.

It catalyses the reaction N-terminal N-formyl-L-methionyl-[peptide] + H2O = N-terminal L-methionyl-[peptide] + formate. Removes the formyl group from the N-terminal Met of newly synthesized proteins. Requires at least a dipeptide for an efficient rate of reaction. N-terminal L-methionine is a prerequisite for activity but the enzyme has broad specificity at other positions. The sequence is that of Peptide deformylase from Prochlorococcus marinus (strain NATL2A).